The sequence spans 215 residues: Glutathione S-transferase D4 (215 aa).

The region spanning Met-1–Asp-80 is the GST N-terminal domain. Glutathione contacts are provided by residues Ser-9, His-50–Ile-52, and Glu-64–Arg-66. One can recognise a GST C-terminal domain in the interval Asp-86–Tyr-207.

It belongs to the GST superfamily. Delta family. Homodimer.

It catalyses the reaction RX + glutathione = an S-substituted glutathione + a halide anion + H(+). Functionally, conjugation of reduced glutathione to a wide number of exogenous and endogenous hydrophobic electrophiles. May be involved in detoxification. The protein is Glutathione S-transferase D4 of Drosophila melanogaster (Fruit fly).